The sequence spans 543 residues: uncharacterized protein (543 aa).

A TRAM domain is found at 1–59 (MLKKNDIVEVEIVDLTHEGAGVAKVDGLVFFVENALPSEKILMRVLKVNKKIGFGKVEK). Positions 283, 312, 333, and 381 each coordinate S-adenosyl-L-methionine. Residue cysteine 408 is the Nucleophile of the active site.

This sequence belongs to the class I-like SAM-binding methyltransferase superfamily. RNA M5U methyltransferase family.

This is an uncharacterized protein from Streptococcus pneumoniae (strain ATCC BAA-255 / R6).